A 203-amino-acid chain; its full sequence is Glycerol-3-phosphate acyltransferase (203 aa).

5 consecutive transmembrane segments (helical) span residues 6-26, 56-76, 82-102, 118-138, and 141-161; these read LTLA…AVLV, AAAM…YVAF, AVSL…PIFF, APIG…VVLI, and YSSL…WYFD.

The protein belongs to the PlsY family. As to quaternary structure, probably interacts with PlsX.

The protein resides in the cell inner membrane. It catalyses the reaction an acyl phosphate + sn-glycerol 3-phosphate = a 1-acyl-sn-glycero-3-phosphate + phosphate. It participates in lipid metabolism; phospholipid metabolism. Its function is as follows. Catalyzes the transfer of an acyl group from acyl-phosphate (acyl-PO(4)) to glycerol-3-phosphate (G3P) to form lysophosphatidic acid (LPA). This enzyme utilizes acyl-phosphate as fatty acyl donor, but not acyl-CoA or acyl-ACP. This Shewanella loihica (strain ATCC BAA-1088 / PV-4) protein is Glycerol-3-phosphate acyltransferase.